Consider the following 302-residue polypeptide: Glycine--tRNA ligase alpha subunit (302 aa).

The protein belongs to the class-II aminoacyl-tRNA synthetase family. As to quaternary structure, tetramer of two alpha and two beta subunits.

It localises to the cytoplasm. The enzyme catalyses tRNA(Gly) + glycine + ATP = glycyl-tRNA(Gly) + AMP + diphosphate. The sequence is that of Glycine--tRNA ligase alpha subunit from Haemophilus influenzae (strain PittGG).